We begin with the raw amino-acid sequence, 120 residues long: Putative B3 domain-containing protein At3g28853 (120 aa).

The segment at residues I19 to I120 is a DNA-binding region (TF-B3).

Its subcellular location is the nucleus. The sequence is that of Putative B3 domain-containing protein At3g28853 from Arabidopsis thaliana (Mouse-ear cress).